The primary structure comprises 271 residues: Putative pyruvate, phosphate dikinase regulatory protein (271 aa).

150–157 contacts ADP; it reads GVSRTSKT.

The protein belongs to the pyruvate, phosphate/water dikinase regulatory protein family. PDRP subfamily.

The enzyme catalyses N(tele)-phospho-L-histidyl/L-threonyl-[pyruvate, phosphate dikinase] + ADP = N(tele)-phospho-L-histidyl/O-phospho-L-threonyl-[pyruvate, phosphate dikinase] + AMP + H(+). The catalysed reaction is N(tele)-phospho-L-histidyl/O-phospho-L-threonyl-[pyruvate, phosphate dikinase] + phosphate + H(+) = N(tele)-phospho-L-histidyl/L-threonyl-[pyruvate, phosphate dikinase] + diphosphate. Its function is as follows. Bifunctional serine/threonine kinase and phosphorylase involved in the regulation of the pyruvate, phosphate dikinase (PPDK) by catalyzing its phosphorylation/dephosphorylation. This chain is Putative pyruvate, phosphate dikinase regulatory protein, found in Oceanobacillus iheyensis (strain DSM 14371 / CIP 107618 / JCM 11309 / KCTC 3954 / HTE831).